We begin with the raw amino-acid sequence, 468 residues long: 3-isopropylmalate dehydratase large subunit (468 aa).

The [4Fe-4S] cluster site is built by Cys348, Cys409, and Cys412.

It belongs to the aconitase/IPM isomerase family. LeuC type 1 subfamily. As to quaternary structure, heterodimer of LeuC and LeuD. [4Fe-4S] cluster serves as cofactor.

It carries out the reaction (2R,3S)-3-isopropylmalate = (2S)-2-isopropylmalate. It functions in the pathway amino-acid biosynthesis; L-leucine biosynthesis; L-leucine from 3-methyl-2-oxobutanoate: step 2/4. Its function is as follows. Catalyzes the isomerization between 2-isopropylmalate and 3-isopropylmalate, via the formation of 2-isopropylmaleate. The polypeptide is 3-isopropylmalate dehydratase large subunit (Dechloromonas aromatica (strain RCB)).